A 142-amino-acid chain; its full sequence is Endoribonuclease YbeY (142 aa).

Zn(2+) contacts are provided by H100, H104, and H110.

The protein belongs to the endoribonuclease YbeY family. It depends on Zn(2+) as a cofactor.

Its subcellular location is the cytoplasm. In terms of biological role, single strand-specific metallo-endoribonuclease involved in late-stage 70S ribosome quality control and in maturation of the 3' terminus of the 16S rRNA. The chain is Endoribonuclease YbeY from Helicobacter pylori (strain G27).